The following is a 205-amino-acid chain: Basigin (205 aa).

A signal peptide spans 1–18 (MAAALFVLLGFALLGTHG). The 85-residue stretch at 19–103 (ASGAAGTVFT…MGTANIQLHG (85 aa)) folds into the Ig-like C2-type domain. Topologically, residues 19-205 (ASGAAGTVFT…AIITLRVRSH (187 aa)) are extracellular. Disulfide bonds link Cys-41/Cys-87 and Cys-126/Cys-185. N-linked (GlcNAc...) asparagine glycans are attached at residues Asn-44, Asn-152, and Asn-186. The 95-residue stretch at 105-199 (PRVKAVKSSE…SKGSDQAIIT (95 aa)) folds into the Ig-like V-type domain.

Homooligomer. Interacts with VEGFA, KDR/VEGFR2, PPIA/CYPA, SLC16A12, SLC16A11, ATP1B2, MAG, L1CAM and AJAP1. Interacts with SLC16A1; interaction mediates SLC16A1 targeting to the plasma membrane. Interacts with SLC16A3; interaction mediates SLC16A3 targeting to the plasma membrane. Interacts with PPIL2; regulates BSG transport to the cell membrane. Interacts with XKR8; promoting its localization at the cell membrane. Interacts with SLC16A6; this interaction mediates targeting to the plasma membrane.

The protein localises to the cell membrane. Its subcellular location is the endoplasmic reticulum membrane. The protein resides in the basolateral cell membrane. Signaling receptor for cyclophilins, essential for PPIA/CYPA and PPIB/CYPB-dependent signaling related to chemotaxis and adhesion of immune cells. Plays an important role in targeting the monocarboxylate transporters SLC16A1/GLUT1, SLC16A3, SLC16A8, SLC16A11 and SLC16A12 to the plasma membrane. Acts as a coreceptor for vascular endothelial growth factor receptor 2 (KDR/VEGFR2) in endothelial cells enhancing its VEGFA-mediated activation and downstream signaling. Promotes angiogenesis through EPAS1/HIF2A-mediated up-regulation of VEGFA and KDR/VEGFR2 in endothelial cells. In Bos taurus (Bovine), this protein is Basigin (BSG).